The primary structure comprises 80 residues: Putative membrane protein insertion efficiency factor (80 aa).

This sequence belongs to the UPF0161 family.

It localises to the cell inner membrane. Functionally, could be involved in insertion of integral membrane proteins into the membrane. This is Putative membrane protein insertion efficiency factor from Paracoccus denitrificans (strain Pd 1222).